Consider the following 452-residue polypeptide: MAKRTLFGTDGVRGTANREPMTADTALRIGMAAGHLLRNGDHRHTVVIGKDTRLSGYMLEPALAAGFISVGMDVVLLGPLPTPAVAMLTRSLRADLGVMITASHNPFQDNGIKLFGPDGYKLSDDQEATIEALLDNGLEGHRAGPTALGKARRLDDCNGRYVEFVKSTFPRGRRLEGLRIVVDCAHGAAYRVAPKVLWELGATIVPIGVTPDGTNINKDCGSLHSRVMCETVVREGADLGVALDGDADRVVLCDEKGALVDGDQLLALIGRNWKRAGTLQGGGVVATVMSNLGLERFLKDEGLALARTPVGDRYVVEHMRAEGYNLGGEQSGHIVMSDFGTTGDGLMAALQVLSALVAEDRPASEVLDVFTPLPQLLRNVRVAGHDPRAILADPQVARAVSAGEGRLNGGGRLLIRKSGTEPLIRVMAEGEDEALVAQVVGDICAVIETASQ.

Catalysis depends on Ser-103, which acts as the Phosphoserine intermediate. Mg(2+) contacts are provided by Ser-103, Asp-244, Asp-246, and Asp-248. Ser-103 carries the phosphoserine modification.

It belongs to the phosphohexose mutase family. The cofactor is Mg(2+). Activated by phosphorylation.

The enzyme catalyses alpha-D-glucosamine 1-phosphate = D-glucosamine 6-phosphate. In terms of biological role, catalyzes the conversion of glucosamine-6-phosphate to glucosamine-1-phosphate. This Rhodospirillum rubrum (strain ATCC 11170 / ATH 1.1.1 / DSM 467 / LMG 4362 / NCIMB 8255 / S1) protein is Phosphoglucosamine mutase.